A 28-amino-acid chain; its full sequence is Odorant-binding protein 1 (28 aa).

Belongs to the calycin superfamily. Lipocalin family. Nasal mucosa.

The protein localises to the secreted. It localises to the extracellular space. In terms of biological role, this soluble protein may play a specific role in odor discrimination and perception. This chain is Odorant-binding protein 1, found in Hystrix cristata (North African crested porcupine).